The primary structure comprises 404 residues: Putative aspartate aminotransferase, cytoplasmic 2 (404 aa).

The residue at position 249 (Lys249) is an N6-(pyridoxal phosphate)lysine.

This sequence belongs to the class-I pyridoxal-phosphate-dependent aminotransferase family. Homodimer. Pyridoxal 5'-phosphate is required as a cofactor.

It localises to the cytoplasm. The enzyme catalyses L-aspartate + 2-oxoglutarate = oxaloacetate + L-glutamate. This chain is Putative aspartate aminotransferase, cytoplasmic 2 (Got1l1), found in Mus musculus (Mouse).